The following is a 364-amino-acid chain: Popeye domain-containing protein 2 (364 aa).

N-linked (GlcNAc...) asparagine glycosylation occurs at N4. The next 2 helical transmembrane spans lie at 37-57 (LLLG…FGFL) and 77-97 (IVLW…HLVY). Positions 276–333 (ADAGPESEKGDEEVCEPAVSPPQATPTSLQQTPPCSTPPATTNFPAPPTRARLSRPDS) are disordered. Over residues 300–309 (TPTSLQQTPP) the composition is skewed to polar residues. Residue T361 is modified to Phosphothreonine.

This sequence belongs to the popeye family. As to expression, expressed predominantly in the heart and in the skeletal muscle.

The protein resides in the membrane. Its subcellular location is the cell membrane. It localises to the sarcolemma. Functionally, important for the maintenance of cardiac function. Plays a regulatory function in heart rate dynamics mediated, at least in part, through cAMP-binding and, probably, by increasing cell surface expression of the potassium channel KCNK2 and enhancing current density. This is Popeye domain-containing protein 2 (POPDC2) from Homo sapiens (Human).